A 360-amino-acid polypeptide reads, in one-letter code: Protein Wnt-2 (360 aa).

The first 25 residues, 1-25 (MNSPLRGIWLWLPLLLTWLTPEVSS), serve as a signal peptide directing secretion. Cystine bridges form between Cys-76–Cys-87, Cys-127–Cys-135, Cys-137–Cys-157, Cys-206–Cys-220, Cys-208–Cys-215, Cys-278–Cys-309, Cys-294–Cys-304, Cys-308–Cys-348, Cys-324–Cys-339, Cys-326–Cys-336, and Cys-331–Cys-332. Ser-212 is lipidated: O-palmitoleoyl serine; by PORCN. A glycan (N-linked (GlcNAc...) asparagine) is linked at Asn-295.

This sequence belongs to the Wnt family. Palmitoleoylation is required for efficient binding to frizzled receptors. Depalmitoleoylation leads to Wnt signaling pathway inhibition.

Its subcellular location is the secreted. The protein resides in the extracellular space. It is found in the extracellular matrix. Functionally, ligand for members of the frizzled family of seven transmembrane receptors. Functions in the canonical Wnt signaling pathway that results in activation of transcription factors of the TCF/LEF family. Functions as a upstream regulator of FGF10 expression. Plays an important role in embryonic lung development. May contribute to embryonic brain development by regulating the proliferation of dopaminergic precursors and neurons. This chain is Protein Wnt-2 (WNT2), found in Callithrix jacchus (White-tufted-ear marmoset).